A 290-amino-acid polypeptide reads, in one-letter code: Nucleotide-binding protein LAR_0375 (290 aa).

Residue 13 to 20 participates in ATP binding; it reads GMSGAGKT. 63–66 lines the GTP pocket; sequence DMRS.

The protein belongs to the RapZ-like family.

Its function is as follows. Displays ATPase and GTPase activities. The polypeptide is Nucleotide-binding protein LAR_0375 (Limosilactobacillus reuteri subsp. reuteri (strain JCM 1112) (Lactobacillus reuteri)).